A 345-amino-acid chain; its full sequence is MRVADFSFDLPDELIARYPMAQRNASRLLTLDGNSGALGDKQFTELLEMINPGDLMVFNNTRVIPARMFGQKASGGKLEILVERMLDDKRILAHVRSSKSPKVDSLIHLDGGYQMKMVARHDTLFELELLSELTILEVLEAVGHMPLPPYIDRPDEDADKERYQTVYNQNPGAVAAPTAGLHFDDAMLDALKAKGVNIAFVTLHVGAGTFQPVRVDNVLEHKMHSEWANVPQDVVDLIAQTKAAGKRVVAVGTTSVRSLESAARASLGELKAFSGDTDIFIYPGYQFQVVDAMVTNFHLPESTLIMLVSAFAGFDHVMAAYQHAITQKYRFFSYGDAMFVTKKAH.

It belongs to the QueA family. In terms of assembly, monomer.

Its subcellular location is the cytoplasm. It carries out the reaction 7-aminomethyl-7-carbaguanosine(34) in tRNA + S-adenosyl-L-methionine = epoxyqueuosine(34) in tRNA + adenine + L-methionine + 2 H(+). Its pathway is tRNA modification; tRNA-queuosine biosynthesis. In terms of biological role, transfers and isomerizes the ribose moiety from AdoMet to the 7-aminomethyl group of 7-deazaguanine (preQ1-tRNA) to give epoxyqueuosine (oQ-tRNA). In Shewanella putrefaciens (strain CN-32 / ATCC BAA-453), this protein is S-adenosylmethionine:tRNA ribosyltransferase-isomerase.